Here is a 172-residue protein sequence, read N- to C-terminus: Bone marrow stromal antigen 2 (172 aa).

The Cytoplasmic portion of the chain corresponds to 1-26; sequence MAPSFYHYLPVAMDERWEPKGWSIRR. Lys20 participates in a covalent cross-link: Glycyl lysine isopeptide (Lys-Gly) (interchain with G-Cter in ubiquitin). The chain crosses the membrane as a helical; Signal-anchor for type II membrane protein span at residues 27-47; that stretch reads WWLVAAILVVLIGVVLVCLIV. The Extracellular segment spans residues 48–152; that stretch reads YFANAAHSEA…EISTTVQVNS (105 aa). Residues Asn70 and Asn97 are each glycosylated (N-linked (GlcNAc...) asparagine). The stretch at 103–149 forms a coiled coil; it reads LRDSLKKKVSQTQEQQARIKELENKIERLNQELENLRTQKEISTTVQ. Ser152 carries GPI-anchor amidated serine lipidation. A propeptide spans 153–172 (removed in mature form); it reads GGSVVVSSLLVLVAVLFLHF.

Parallel homodimer; disulfide-linked. May form homotetramers under reducing conditions. Isoform 1 and isoform 2 form homodimers and also heterodimers with each other. Dimerization is essential for its antiviral activity. Interacts (via cytoplasmic domain) with ARHGAP44. Interacts with MMP14 (via C-terminal cytoplasmic tail). Interacts with LILRA4/ILT7. Interacts with RNF115. In terms of processing, N-glycosylated. The GPI anchor is essential for its antiviral activity. Ubiquitously expressed, with highest levels in brain and liver. Present in liver (at protein level).

The protein localises to the golgi apparatus. Its subcellular location is the trans-Golgi network. It is found in the cell membrane. The protein resides in the late endosome. It localises to the membrane raft. The protein localises to the cytoplasm. Its subcellular location is the apical cell membrane. Functionally, IFN-induced antiviral host restriction factor which efficiently blocks the release of diverse mammalian enveloped viruses by directly tethering nascent virions to the membranes of infected cells. Acts as a direct physical tether, holding virions to the cell membrane and linking virions to each other. The tethered virions can be internalized by endocytosis and subsequently degraded or they can remain on the cell surface. In either case, their spread as cell-free virions is restricted. Its target viruses belong to diverse families, including retroviridae: human immunodeficiency virus type 1 (HIV-1), mouse mammary tumor virus (MMTV) and murine leukemia virus (MLV), filoviridae: ebola virus (EBOV), arenaviridae: lassa virus (LASV), and rhabdoviridae: vesicular stomatitis virus (VSV). Can inhibit cell surface proteolytic activity of MMP14 causing decreased activation of MMP15 which results in inhibition of cell growth and migration. Can stimulate signaling by LILRA4/ILT7 and consequently provide negative feedback to the production of IFN by plasmacytoid dendritic cells in response to viral infection. Plays a role in the organization of the subapical actin cytoskeleton in polarized epithelial cells. This is Bone marrow stromal antigen 2 (Bst2) from Rattus norvegicus (Rat).